The sequence spans 219 residues: Flagellar transcriptional regulator FlhC (219 aa).

Zn(2+) is bound by residues Cys137, Cys140, Cys157, and Cys160.

The protein belongs to the FlhC family. Heterohexamer composed of two FlhC and four FlhD subunits. Each FlhC binds a FlhD dimer, forming a heterotrimer, and a hexamer assembles by dimerization of two heterotrimers. Requires Zn(2+) as cofactor.

Its subcellular location is the cytoplasm. Functions in complex with FlhD as a master transcriptional regulator that regulates transcription of several flagellar and non-flagellar operons by binding to their promoter region. Activates expression of class 2 flagellar genes, including fliA, which is a flagellum-specific sigma factor that turns on the class 3 genes. Also regulates genes whose products function in a variety of physiological pathways. This Paraburkholderia phymatum (strain DSM 17167 / CIP 108236 / LMG 21445 / STM815) (Burkholderia phymatum) protein is Flagellar transcriptional regulator FlhC.